We begin with the raw amino-acid sequence, 640 residues long: F-box protein MET30 (640 aa).

A compositionally biased stretch (basic and acidic residues) spans 1–19 (MRRERQRMMSFEDKDKDDL). The tract at residues 1–84 (MRRERQRMMS…ATNDSGTRVQ (84 aa)) is disordered. Residues 1–299 (MRRERQRMMS…KGHCRIQEFK (299 aa)) form a necessary to mediate nuclear localization region. 2 stretches are compositionally biased toward polar residues: residues 45-56 (TGSSDDLAQGSS) and 64-82 (ATRS…SGTR). Position 67 is a phosphoserine (Ser67). The interaction with SKP1/CBF3D stretch occupies residues 180-225 (KIDFISILPQELSLKILSYLDCQSLCNATRVCRKWQKLADDDRVWY). Residues 180–277 (KIDFISILPQ…TQTTRPWKVI (98 aa)) are important for mediating homomultimerization. The 47-residue stretch at 181–227 (IDFISILPQELSLKILSYLDCQSLCNATRVCRKWQKLADDDRVWYHM) folds into the F-box domain. The segment at 277–640 (IYRERFKVES…VKMYKFDLND (364 aa)) is interaction with MET4. WD repeat units lie at residues 300–328 (GHMD…GIWD), 340–368 (GHSD…RVWN), 380–408 (GHSD…KVWH), 419–449 (GHTE…RMWD), 461–499 (GHVG…TMTD), 509–538 (NEQE…KLWD), 550–578 (GHVE…KVWD), and 607–635 (DKVA…KMYK). Residues 481-495 (ATDNTSDGSSPQDDP) show a composition bias toward polar residues. Residues 481-516 (ATDNTSDGSSPQDDPTMTDGADESDTPSNEQETVLD) form a disordered region.

This sequence belongs to the WD repeat MET30/SCONB/SCON-2 family. In terms of assembly, homomultimer. Interacts with CDC53 and SKP1/CBF3D to form the E3 ubiquitin ligase complex SCF(Met30). Interacts with MET4.

The protein localises to the cytoplasm. It localises to the nucleus. The protein operates within protein modification; protein ubiquitination. Functionally, substrate-recognition component of the SCF(Met30) complex, an E3 ubiquitin ligase complex that mediates the ubiquitination and subsequent proteasomal degradation of target proteins. Negatively regulates sulfur amino acids biosynthesis genes expression. Controls cell cycle function (being required for the G1/S transition and M-phase but not the S-phase), sulfur metabolism, and methionine biosynthesis as part of the SCF(Met30) complex. Required for the efficient binding of CDC45 and MCM proteins to origins of replication. Required for efficient expression of G1 cyclins. The SCF(Met30) complex catalyzes ubiquitination and degradation of the Cdk-inhibitory kinase SWE1. Involved in the S-adenosylmethionine (AdoMet)-mediated inhibition of the transcription function of MET4. The SCF(Met30) complex mediates ubiquitination and subsequent degradation of MET4 and the cellular response to cadmium. The SCF(Met30) complex acts as an inhibitor of autophagy by promoting ubiquitination and degradation of ATG9 in normal conditions. This Saccharomyces cerevisiae (strain ATCC 204508 / S288c) (Baker's yeast) protein is F-box protein MET30.